We begin with the raw amino-acid sequence, 204 residues long: Urease accessory protein UreG (204 aa).

11 to 18 (GPVGAGKT) lines the GTP pocket.

Belongs to the SIMIBI class G3E GTPase family. UreG subfamily. Homodimer. UreD, UreF and UreG form a complex that acts as a GTP-hydrolysis-dependent molecular chaperone, activating the urease apoprotein by helping to assemble the nickel containing metallocenter of UreC. The UreE protein probably delivers the nickel.

Its subcellular location is the cytoplasm. Its function is as follows. Facilitates the functional incorporation of the urease nickel metallocenter. This process requires GTP hydrolysis, probably effectuated by UreG. This is Urease accessory protein UreG from Staphylococcus aureus (strain MSSA476).